The following is a 359-amino-acid chain: Membrane-bound lytic murein transglycosylase C (359 aa).

The first 16 residues, 1–16, serve as a signal peptide directing secretion; that stretch reads MKKYLALALIAPLLIS. A lipid anchor (N-palmitoyl cysteine) is attached at cysteine 17. Cysteine 17 carries the S-diacylglycerol cysteine lipid modification.

It belongs to the transglycosylase Slt family.

The protein localises to the cell outer membrane. It catalyses the reaction Exolytic cleavage of the (1-&gt;4)-beta-glycosidic linkage between N-acetylmuramic acid (MurNAc) and N-acetylglucosamine (GlcNAc) residues in peptidoglycan, from either the reducing or the non-reducing ends of the peptidoglycan chains, with concomitant formation of a 1,6-anhydrobond in the MurNAc residue.. In terms of biological role, murein-degrading enzyme. May play a role in recycling of muropeptides during cell elongation and/or cell division. In Escherichia coli O157:H7, this protein is Membrane-bound lytic murein transglycosylase C.